Here is a 533-residue protein sequence, read N- to C-terminus: Beta-xylosidase (533 aa).

The Proton acceptor role is filled by D14. The active-site Proton donor is the E186.

It belongs to the glycosyl hydrolase 43 family. As to quaternary structure, homodimer.

The protein resides in the cell membrane. The catalysed reaction is Hydrolysis of (1-&gt;4)-beta-D-xylans, to remove successive D-xylose residues from the non-reducing termini.. The chain is Beta-xylosidase (xynB) from Bacillus subtilis (strain 168).